The sequence spans 128 residues: Small ribosomal subunit protein uS11 (128 aa).

It belongs to the universal ribosomal protein uS11 family. As to quaternary structure, part of the 30S ribosomal subunit. Interacts with proteins S7 and S18. Binds to IF-3.

Located on the platform of the 30S subunit, it bridges several disparate RNA helices of the 16S rRNA. Forms part of the Shine-Dalgarno cleft in the 70S ribosome. The polypeptide is Small ribosomal subunit protein uS11 (Chromohalobacter salexigens (strain ATCC BAA-138 / DSM 3043 / CIP 106854 / NCIMB 13768 / 1H11)).